The chain runs to 295 residues: Sulfotransferase 1A1 (295 aa).

48–53 (KSGTTW) lines the 3'-phosphoadenylyl sulfate pocket. A substrate-binding site is contributed by 106-108 (KTH). The Proton acceptor role is filled by H108. 3'-phosphoadenylyl sulfate-binding positions include R130, S138, Y193, 227-232 (TSFKEM), and 255-259 (FMRKG). Phosphoserine is present on S138.

This sequence belongs to the sulfotransferase 1 family. Homodimer. As to expression, ubiquitously expressed in canine tissues with highest expression in male and female liver.

The protein resides in the cytoplasm. It carries out the reaction a phenol + 3'-phosphoadenylyl sulfate = an aryl sulfate + adenosine 3',5'-bisphosphate + H(+). The enzyme catalyses 17beta-estradiol + 3'-phosphoadenylyl sulfate = 17beta-estradiol 3-sulfate + adenosine 3',5'-bisphosphate + H(+). It catalyses the reaction 4-ethylphenol + 3'-phosphoadenylyl sulfate = 4-ethylphenyl sulfate + adenosine 3',5'-bisphosphate + H(+). The catalysed reaction is 4-nitrophenol + 3'-phosphoadenylyl sulfate = 4-nitrophenyl sulfate + adenosine 3',5'-bisphosphate. It carries out the reaction dopamine + 3'-phosphoadenylyl sulfate = dopamine 3-O-sulfate + adenosine 3',5'-bisphosphate + H(+). The enzyme catalyses dopamine + 3'-phosphoadenylyl sulfate = dopamine 4-O-sulfate + adenosine 3',5'-bisphosphate + H(+). It catalyses the reaction 3,3',5-triiodo-L-thyronine + 3'-phosphoadenylyl sulfate = 3,3',5-triiodo-L-thyronine sulfate + adenosine 3',5'-bisphosphate + H(+). The catalysed reaction is 3,3',5'-triiodo-L-thyronine + 3'-phosphoadenylyl sulfate = 3,3',5'-triiodo-L-thyronine sulfate + adenosine 3',5'-bisphosphate + H(+). It carries out the reaction 3,3'-diiodo-L-thyronine + 3'-phosphoadenylyl sulfate = 3,3'-diiodo-L-thyronine sulfate + adenosine 3',5'-bisphosphate + H(+). The enzyme catalyses L-thyroxine + 3'-phosphoadenylyl sulfate = L-thyroxine sulfate + adenosine 3',5'-bisphosphate + H(+). Its function is as follows. Sulfotransferase that utilizes 3'-phospho-5'-adenylyl sulfate (PAPS) as sulfonate donor to catalyze the sulfate conjugation of a wide variety of acceptor molecules bearing a hydroxyl or an amine group. Sulfonation increases the water solubility of most compounds, and therefore their renal excretion, but it can also result in bioactivation to form active metabolites. Displays broad substrate specificity for small phenolic compounds. Plays an important role in the sulfonation of endogenous molecules such as steroid hormones. Mediates also the metabolic activation of carcinogenic N-hydroxyarylamines leading to highly reactive intermediates capable of forming DNA adducts, potentially resulting in mutagenesis. May play a role in gut microbiota-host metabolic interaction. O-sulfonates 4-ethylphenol (4-EP), a dietary tyrosine-derived metabolite produced by gut bacteria. The product 4-EPS crosses the blood-brain barrier and may negatively regulate oligodendrocyte maturation and myelination, affecting the functional connectivity of different brain regions associated with the limbic system. Catalyzes the sulfate conjugation of dopamine. Catalyzes the sulfation of T4 (L-thyroxine/3,5,3',5'-tetraiodothyronine), T3 (3,5,3'-triiodothyronine), rT3 (3,3',5'-triiodothyronine) and 3,3'-T2 (3,3'-diiodothyronine), with a substrate preference of 3,3'-T2 &gt; rT3 &gt; T3 &gt; T4. The protein is Sulfotransferase 1A1 (SULT1A1) of Canis lupus familiaris (Dog).